Consider the following 743-residue polypeptide: Mitochondrial exoribonuclease DSS-1 (743 aa).

The transit peptide at 1-67 (MTPRRVAKLV…KELLHLQRSL (67 aa)) directs the protein to the mitochondrion. Positions 186–542 (THNPAYAIDS…VHHQLKVWLW (357 aa)) constitute an RNB domain. The tract at residues 320 to 357 (VGNQHHHTERESTQASPAKREEGKKGMVASGGTSSCRP) is disordered. Residues 325–344 (HHTERESTQASPAKREEGKK) are compositionally biased toward basic and acidic residues.

The protein belongs to the RNR ribonuclease family. Component of the mitochondrial 3' processome (MPsome) complex composed at least of terminal uridylyltransferase KRET1/TUT1, 3'-5' exonuclease DSS1, MPSS1, MPSS2 and MPSS3. Within the complex, interacts with KRET1 and MPSS2. Component of the mitochondrial degradosome complex composed at least of 3'-5' exonuclease DSS1 and helicase SUV3. Within the complex, interacts with helicase SUV3.

Its subcellular location is the mitochondrion. It catalyses the reaction Exonucleolytic cleavage in the 3'- to 5'-direction to yield nucleoside 5'-phosphates.. Functionally, 3'-5'exoribonuclease which is involved in the post-transcriptional processing, editing and degradation of mitochondrial RNAs, including mRNAs, rRNAs and guided RNAs (gRNA). As part of the mitochondrial 3' processome (MPsome), involved in the maturation of guided RNA (gRNA) precursors by catalyzing the processive 3'-5' degradation of uridylated gRNA precursors. Plays a role in the degradation of 12S rRNA processing intermediates and maturation by-products. The protein is Mitochondrial exoribonuclease DSS-1 of Trypanosoma brucei brucei.